Reading from the N-terminus, the 224-residue chain is Cysteine S-methyltransferase NleE (224 aa).

Residues 49–52 form an interaction with host proteins TAB2, TAB3 and ZRANB3 region; the sequence is GITR. Ala92, Ser98, Arg107, Gln111, Tyr204, and Glu208 together coordinate S-adenosyl-L-methionine.

It belongs to the NleE/OspZ family. In terms of assembly, monomer.

It is found in the secreted. The protein localises to the host nucleus. The catalysed reaction is L-cysteinyl-[protein] + S-adenosyl-L-methionine = S-methyl-L-cysteinyl-[protein] + S-adenosyl-L-homocysteine + H(+). Cysteine methyltransferase effector that inhibits host cell NF-kappa-B activation by preventing nuclear translocation of host protein RELA/p65. Acts by mediating cysteine methylation of host proteins TAB2 and TAB3: methylation of a conserved cysteine residue of the RanBP2-type zinc finger (NZF) of TAB2 and TAB3 disrupts zinc-binding, thereby inactivating the ubiquitin chain-binding activity of TAB2 and TAB3, leading to NF-kappa-B inactivation. Also mediates cysteine methylation of host protein ZRANB3, inactivating its ability to bind ubiquitin chains. In Escherichia coli O127:H6 (strain E2348/69 / EPEC), this protein is Cysteine S-methyltransferase NleE.